Consider the following 348-residue polypeptide: Phenylalanine--tRNA ligase alpha subunit (348 aa).

Glu-259 serves as a coordination point for Mg(2+).

It belongs to the class-II aminoacyl-tRNA synthetase family. Phe-tRNA synthetase alpha subunit type 1 subfamily. In terms of assembly, tetramer of two alpha and two beta subunits. Mg(2+) serves as cofactor.

The protein localises to the cytoplasm. It carries out the reaction tRNA(Phe) + L-phenylalanine + ATP = L-phenylalanyl-tRNA(Phe) + AMP + diphosphate + H(+). The chain is Phenylalanine--tRNA ligase alpha subunit from Enterococcus faecalis (strain ATCC 700802 / V583).